A 1311-amino-acid polypeptide reads, in one-letter code: Zinc finger protein 423 (1311 aa).

The span at 1–11 (MSRRKQAKPRS) shows a compositional bias: basic residues. 3 disordered regions span residues 1-21 (MSRR…EASD), 34-70 (GGLE…EDVE), and 95-123 (AHRC…VASP). Over residues 41 to 54 (ECDRKSSRALEDRN) the composition is skewed to basic and acidic residues. S55 and S58 each carry phosphoserine. The C2H2-type 1; degenerate zinc finger occupies 75–101 (YTCDHCQQDFESLADLTDHRAHRCPGD). The segment covering 110–123 (WVASSPSSKDVASP) has biased composition (polar residues). 7 C2H2-type zinc fingers span residues 146 to 168 (YPCQ…EQIH), 174 to 196 (FKCT…IKLH), 202 to 224 (YHCH…LKTH), 230 to 252 (FKCS…MQAH), 271 to 294 (FMCD…LTLH), 303 to 326 (LQCI…HQAH), and 331 to 353 (HKCP…LDSH). Positions 354 to 426 (RQPDSSNHSV…PLRGQKKMRD (73 aa)) are disordered. A compositionally biased stretch (polar residues) spans 373–382 (ASMSSATPDS). The span at 390–404 (SVASMSSATPDSSAS) shows a compositional bias: low complexity. The segment at 436–460 (YSCPYCSKRDFTSLAVLEIHLKTIH) adopts a C2H2-type 9; degenerate zinc-finger fold. 3 C2H2-type zinc fingers span residues 468-491 (HTCQ…RKLH), 507-530 (FHCN…RVSH), and 544-567 (FFCN…QQAH). The C2H2-type 13; atypical zinc-finger motif lies at 590-615 (YSCPYCTNSPIFGSILKLTKHIKENH). The disordered stretch occupies residues 617-654 (NIPLAHSKKSKAEQSPVSSDVEVSSPKRQRLSGSANSI). A Phosphoserine modification is found at S631. Residues 631–642 (SPVSSDVEVSSP) show a composition bias toward low complexity. C2H2-type zinc fingers lie at residues 659–681 (YPCN…LKLH), 689–711 (QACP…LTVH), 719–742 (YVCE…LDMH), 747–770 (YHCT…AVKH), 777–800 (YRCT…KHSH), 808–830 (HKCI…ITTH), and 834–857 (YNCR…REKH). The C2H2-type 21; degenerate zinc finger occupies 913–935 (YGCDICGAAYTMEVLLQNHRLRD). 3 C2H2-type zinc fingers span residues 957–979 (HKCN…LQTH), 986–1008 (YMCP…KVTH), and 1047–1069 (FRCV…GTFH). At S1081 the chain carries Phosphoserine. The C2H2-type 25; degenerate zinc finger occupies 1091 to 1109 (YKCALCLKEFRSKQDLVRL). 5 consecutive C2H2-type zinc fingers follow at residues 1147 to 1170 (LRCP…QVDH), 1195 to 1217 (YQCI…VANH), 1225 to 1247 (HECK…LIEH), 1256 to 1279 (FKCP…FAVH), and 1286 to 1309 (YDCS…MSQH). Basic and acidic residues predominate over residues 1163–1174 (ESHMQVDHRDLT). Residues 1163–1190 (ESHMQVDHRDLTPETSGPRKGAQTSPVP) form a disordered region.

The protein belongs to the krueppel C2H2-type zinc-finger protein family. In terms of assembly, homodimer. Interacts with PARP1, SMAD1 and SMAD4. Interacts with EBF1. Interacts with CEP290. Expressed in brain, eye, olfactory epithelium, spleen and heart. Expressed in the basal layer, consisting of neural precursor cells and immature sensory neurons of the olfactory epithelium, but not in the mature receptor cells.

The protein resides in the nucleus. Transcription factor that can both act as an activator or a repressor depending on the context. Plays a central role in BMP signaling and olfactory neurogenesis. Associates with SMADs in response to BMP2 leading to activate transcription of BMP target genes. Acts as a transcriptional repressor via its interaction with EBF1, a transcription factor involved in terminal olfactory receptor neurons differentiation; this interaction preventing EBF1 to bind DNA and activate olfactory-specific genes. Involved in olfactory neurogenesis by participating in a developmental switch that regulates the transition from differentiation to maturation in olfactory receptor neurons. Controls proliferation and differentiation of neural precursors in cerebellar vermis formation. The polypeptide is Zinc finger protein 423 (Znf423) (Rattus norvegicus (Rat)).